Reading from the N-terminus, the 1130-residue chain is MPVQAPQWTDFLSCPICTQTFDETIRKPISLGCGHTVCKMCLNKLHRKACPFDQTTINTDIELLPVNSALLQLVGAQIPEQQPITLCSGVEDTKHYEEAKKCVEELALYLKPLSSARGVGLNSTTQSVLSRPMQRKLVTLVHCQLVEEEGRIRAMRAARSLGERTVTELILQHQNPQQLSSNLWAAVRARGCQFLGPAMQEEALKLVLLALEDGSALSRKVLVLFVVQRLEPRFPQASKTSIGHVVQLLYRASCFKVTKRDEDSSLMQLKEEFRTYEALRREHDSQIVQIAMEAGLRIAPDQWSSLLYGDQSHKSHMQSIIDKLQTPASFAQSVQELTIALQRTGDPANLNRLRPHLELLANIDPSPDAPPPTWEQLENGLVAVRTVVHGLVDYIQNHSKKGADQQQPPQHSKYKTYMCRDMKQRGGCPRGASCTFAHSQEELEKFRKMNKRLVPRRPLSASLGQLNEVGLPSAPILSDESAVDLSNRKPPALPNGIASSGSTVTQLIPRGTDPSFDSSLKPVKLDHLSSSAPGSPPDLLESAPKSISALPVNPHPVPPRGPTDLPPMPVTKPIQMVPRGSQLYPAQQADVYYQDPRGSAPAFETAPYQQGMYYTPPPCVSRFVRPPPSAPEPGPPYLDHYSPYLQDRVINSQYGTQPQQYPPMYPAHYDGRRVYPAQSYTREEMFRESPIPIDIPSAAVPSYVPESRERYQQVEGYYPVAPHPAQIRPSYPRDPPYSRLPPPQPHPSLDELHRRRKEIMAQLEERKVISPPPFAPSPTLPPAFHPEEFLDEDLKVAGKYKANDYSQYSPWSCDTIGSYIGTKDAKPKDVVAAGSVEMMNVESKGTREQRLDLQRRAVETSDDDLIPFGDRPTVSRFGAISRTSKTLYQGAGPLQAIAPQGAPTKSINISDYSAYGAHGGWGDSPYSPHANIPPQGHFIEREKMSMAEVASHGKPLLSAEREQLRLELQQLNHQISQQTQLRGLEAVSNRLVLQREVNTLASQPQPPQLPPKWPGMISSEQLSLELHQVEREIGKRTRELSMENQCSVDMKSKLGTSKQAENGQPEPQNKIRTEDLTLTFSDVPNGSALTQENLSLLSNKTSSLNLSEDSEGGGDNNDSQRSGVVSNSAP.

The Zn(2+) site is built by Cys14, Cys17, Cys33, His35, Cys38, Cys50, and Asp53. The RING-type; degenerate zinc finger occupies 14 to 54 (CPICTQTFDETIRKPISLGCGHTVCKMCLNKLHRKACPFDQ). The interval 128 to 176 (VLSRPMQRKLVTLVHCQLVEEEGRIRAMRAARSLGERTVTELILQHQNP) is HEPN-N. Positions 177–326 (QQLSSNLWAA…MQSIIDKLQT (150 aa)) are ROQ. The segment at 327-399 (PASFAQSVQE…GLVDYIQNHS (73 aa)) is HEPN-C. Residues 413 to 441 (KYKTYMCRDMKQRGGCPRGASCTFAHSQE) form a C3H1-type zinc finger. Ser462 bears the Phosphoserine mark. Disordered stretches follow at residues 493–567 (LPNG…DLPP) and 722–750 (PHPAQIRPSYPRDPPYSRLPPPQPHPSLD). A compositionally biased stretch (polar residues) spans 497–506 (IASSGSTVTQ). Ser531 and Ser535 each carry phosphoserine. Composition is skewed to pro residues over residues 553-567 (NPHPVPPRGPTDLPP) and 732-746 (PRDPPYSRLPPPQPH). 3 positions are modified to phosphoserine: Ser861, Ser1107, and Ser1110. Positions 1100-1130 (KTSSLNLSEDSEGGGDNNDSQRSGVVSNSAP) are disordered. Positions 1116-1130 (NNDSQRSGVVSNSAP) are enriched in polar residues.

Interacts with DDX6 and EDC4. Interacts with CCR4-NOT deadenylase complex. Interacts with RC3H1; the interaction is RNA independent. Proteolytically cleaved after Arg-510 and Arg-579 by MALT1 in activated CD4(+) T cells; cleavage at Arg-510 and Arg-579 is critical for promoting RC3H1 degradation in response to T-cell receptor (TCR) stimulation, and hence is necessary for prolonging the stability of a set of mRNAs controlling Th17 cell differentiation. Widely expressed, with highest levels in lymph node and thymus and slightly lesser amounts in brain, lung, and spleen (at protein level). Very weak expression in heart, muscle, and kidney (at protein level). Expressed in CD4(+) helper T-cells (at protein level).

The protein localises to the cytoplasm. Its subcellular location is the P-body. It localises to the cytoplasmic granule. It carries out the reaction S-ubiquitinyl-[E2 ubiquitin-conjugating enzyme]-L-cysteine + [acceptor protein]-L-lysine = [E2 ubiquitin-conjugating enzyme]-L-cysteine + N(6)-ubiquitinyl-[acceptor protein]-L-lysine.. The protein operates within protein modification; protein ubiquitination. In terms of biological role, post-transcriptional repressor of mRNAs containing a conserved stem loop motif, called constitutive decay element (CDE), which is often located in the 3'-UTR, as in HMGXB3, ICOS, IER3, NFKBID, NFKBIZ, PPP1R10, TNF, TNFRSF4 and in many more mRNAs. Cleaves translationally inactive mRNAs harboring a stem-loop (SL), often located in their 3'-UTRs, during the early phase of inflammation in a helicase UPF1-independent manner. Binds to CDE and promotes mRNA deadenylation and degradation. This process does not involve miRNAs. In follicular helper T (Tfh) cells, represses of ICOS and TNFRSF4/Ox40 expression, thus preventing spontaneous Tfh cell differentiation, germinal center B-cell differentiation in the absence of immunization and autoimmunity. In resting or LPS-stimulated macrophages, controls inflammation by suppressing TNF expression. Also recognizes CDE in its own mRNA and in that of paralogous RC3H2, possibly leading to feedback loop regulation. Inhibits cooperatively with ZC3H12A the differentiation of helper T cells Th17 in lungs. They repress target mRNA encoding the Th17 cell-promoting factors IL6, ICOS, REL, IRF4, NFKBID and NFKBIZ. The cooperation requires RNA-binding by RC3H1 and the nuclease activity of ZC3H12A. Recognizes and binds mRNAs containing a hexaloop stem-loop motif, called alternative decay element (ADE). Together with ZC3H12A, destabilizes TNFRSF4/OX40 mRNA by binding to the conserved stem loop structure in its 3'UTR. Able to interact with double-stranded RNA. miRNA-binding protein that regulates microRNA homeostasis. Enhances DICER-mediated processing of pre-MIR146a but reduces mature MIR146a levels through an increase of 3' end uridylation. Both inhibits ICOS mRNA expression and they may act together to exert the suppression. Acts as a ubiquitin E3 ligase. Pairs with E2 enzymes UBE2A, UBE2B, UBE2D2, UBE2F, UBE2G1, UBE2G2 and UBE2L3 and produces polyubiquitin chains. Shows the strongest activity when paired with UBE2N:UBE2V1 or UBE2N:UBE2V2 E2 complexes and generate both short and long polyubiquitin chains. The sequence is that of Roquin-1 from Mus musculus (Mouse).